The following is a 745-amino-acid chain: Copper-transporting ATPase (745 aa).

The HMA domain occupies 1–67 (MKESFYIEGM…LIEKLGYSPK (67 aa)). Over 1 to 83 (MKESFYIEGM…KKEFFSPNVK (83 aa)) the chain is Cytoplasmic. Cu cation is bound by residues Cys-12 and Cys-15. The helical transmembrane segment at 84–104 (LALAVIFTLFVVYLSMGAMLS) threads the bilayer. The Extracellular portion of the chain corresponds to 105 to 124 (PSLLPKSLLAIDNHSNFLNA). A helical transmembrane segment spans residues 125-144 (CLQLIGTLIVMHWGRDFYIQ). At 145-151 (GFKALWH) the chain is on the cytoplasmic side. The helical transmembrane segment at 152-172 (RQPNMSSLIAIGTSAALISSL) threads the bilayer. The Extracellular segment spans residues 173–194 (WQLYLVYTDHYTDQWSYGHYYF). A helical transmembrane segment spans residues 195–215 (ESVCVILMFVMVGKRIENVSK). Residues 216–343 (DKALDAMQAL…KAEISRLADK (128 aa)) are Cytoplasmic-facing. Residues 344-366 (VSSVFVPSVIAIAILAFVVWLII) form a helical membrane-spanning segment. Residues 367–379 (APKPDFWWNFGIA) are Extracellular-facing. The chain crosses the membrane as a helical span at residues 380 to 397 (LEVFVSVLVISCPCALGL). Residues 398–685 (ATLMSILVAN…KLSQATIKNI (288 aa)) lie on the Cytoplasmic side of the membrane. Asp-435 (4-aspartylphosphate intermediate) is an active-site residue. Mg(2+)-binding residues include Asp-631 and Asp-635. The helical transmembrane segment at 686–705 (KENLFWAFCYNSVFIPLACG) threads the bilayer. The Extracellular portion of the chain corresponds to 706-716 (VLYKANIMLSP). A helical transmembrane segment spans residues 717–735 (AIAGLAMSLSSVSVVLNSQ). Topologically, residues 736-745 (RLRNFKIKDH) are cytoplasmic.

This sequence belongs to the cation transport ATPase (P-type) (TC 3.A.3) family. Type IB subfamily.

The protein localises to the cell membrane. The catalysed reaction is Cu(2+)(in) + ATP + H2O = Cu(2+)(out) + ADP + phosphate + H(+). In terms of biological role, probably involved in copper export. The chain is Copper-transporting ATPase (copA) from Helicobacter pylori (Campylobacter pylori).